The primary structure comprises 886 residues: Isoleucine--tRNA ligase (886 aa).

A 'HIGH' region motif is present at residues 60–70; that stretch reads PYANGDIHIGH. E546 serves as a coordination point for L-isoleucyl-5'-AMP. A 'KMSKS' region motif is present at residues 587 to 591; the sequence is KMSKS. K590 contacts ATP. Zn(2+) is bound by residues C856, C859, C870, and C873.

Belongs to the class-I aminoacyl-tRNA synthetase family. IleS type 1 subfamily. Monomer. Zn(2+) is required as a cofactor.

The protein resides in the cytoplasm. It catalyses the reaction tRNA(Ile) + L-isoleucine + ATP = L-isoleucyl-tRNA(Ile) + AMP + diphosphate. Functionally, catalyzes the attachment of isoleucine to tRNA(Ile). As IleRS can inadvertently accommodate and process structurally similar amino acids such as valine, to avoid such errors it has two additional distinct tRNA(Ile)-dependent editing activities. One activity is designated as 'pretransfer' editing and involves the hydrolysis of activated Val-AMP. The other activity is designated 'posttransfer' editing and involves deacylation of mischarged Val-tRNA(Ile). This is Isoleucine--tRNA ligase from Mesomycoplasma hyopneumoniae (strain 7448) (Mycoplasma hyopneumoniae).